The chain runs to 381 residues: Alkanesulfonate monooxygenase (381 aa).

This sequence belongs to the SsuD family. In terms of assembly, homotetramer.

It catalyses the reaction an alkanesulfonate + FMNH2 + O2 = an aldehyde + FMN + sulfite + H2O + 2 H(+). In terms of biological role, catalyzes the desulfonation of aliphatic sulfonates. This Shigella flexneri protein is Alkanesulfonate monooxygenase.